Here is a 256-residue protein sequence, read N- to C-terminus: Undecaprenyl-diphosphatase (256 aa).

The next 8 membrane-spanning stretches (helical) occupy residues 5 to 25, 41 to 61, 74 to 94, 100 to 120, 135 to 155, 180 to 200, 208 to 228, and 234 to 254; these read IIEI…PISS, NSLM…VFYF, LLSL…VISS, LLEN…IILY, LNFK…IPGV, FLLA…NAIG, LVLI…KFFL, and FSLN…FIII.

It belongs to the UppP family.

It is found in the cell inner membrane. It carries out the reaction di-trans,octa-cis-undecaprenyl diphosphate + H2O = di-trans,octa-cis-undecaprenyl phosphate + phosphate + H(+). Functionally, catalyzes the dephosphorylation of undecaprenyl diphosphate (UPP). Confers resistance to bacitracin. This Pelagibacter ubique (strain HTCC1062) protein is Undecaprenyl-diphosphatase.